A 404-amino-acid polypeptide reads, in one-letter code: MKYSEIMVRHGELSTKGKNRMRFINRLKANIQDVLSAYPEVTVRSTRDRTHVLLNGADDRSVIEALKPVFGIQGLSPVYKVEKSVPVLIAAVQEIMSSLYREGLTFKISSKRSDHQFELDSRDLNHTLGAAVFEALPHIKAQMKNPDVTLKVEIRDEAAYLSHEDIKGAGGLPVGASGKGMLMLSGGIDSPVAGYLSLKRGVEIEAVHFASPPYTSPGALRKAKDLTQRLTRFGGNIQFIEVPFTEIQEEIKHKAPEAYLMTLTRRFMLRITDAIREKRKALVIINGESLGQVASQTLESMQAINAVTSTPIIRPVVAMDKLEIIDIAQQIDTFDISIQPFEDCCTIFAPDRPKTNPKLANVERYESRFDVDGLVERAVAGIRVTEITPEIETDSLSTLIEELL.

In terms of domain architecture, THUMP spans 60 to 165 (RSVIEALKPV…DEAAYLSHED (106 aa)). ATP-binding positions include 183–184 (ML), 208–209 (HF), R265, G287, and Q296.

It belongs to the ThiI family.

It is found in the cytoplasm. It catalyses the reaction [ThiI sulfur-carrier protein]-S-sulfanyl-L-cysteine + a uridine in tRNA + 2 reduced [2Fe-2S]-[ferredoxin] + ATP + H(+) = [ThiI sulfur-carrier protein]-L-cysteine + a 4-thiouridine in tRNA + 2 oxidized [2Fe-2S]-[ferredoxin] + AMP + diphosphate. It carries out the reaction [ThiS sulfur-carrier protein]-C-terminal Gly-Gly-AMP + S-sulfanyl-L-cysteinyl-[cysteine desulfurase] + AH2 = [ThiS sulfur-carrier protein]-C-terminal-Gly-aminoethanethioate + L-cysteinyl-[cysteine desulfurase] + A + AMP + 2 H(+). Its pathway is cofactor biosynthesis; thiamine diphosphate biosynthesis. Catalyzes the ATP-dependent transfer of a sulfur to tRNA to produce 4-thiouridine in position 8 of tRNAs, which functions as a near-UV photosensor. Also catalyzes the transfer of sulfur to the sulfur carrier protein ThiS, forming ThiS-thiocarboxylate. This is a step in the synthesis of thiazole, in the thiamine biosynthesis pathway. The sulfur is donated as persulfide by IscS. This chain is Probable tRNA sulfurtransferase, found in Streptococcus equi subsp. zooepidemicus (strain H70).